Here is a 771-residue protein sequence, read N- to C-terminus: Protein translocase subunit SecA 2 (771 aa).

ATP-binding positions include glutamine 91, 109–113 (GEGKT), and aspartate 496.

It belongs to the SecA family. In terms of assembly, monomer and homodimer. Part of the essential Sec protein translocation apparatus which comprises SecA, SecYEG and auxiliary proteins SecDF. Other proteins may also be involved.

The protein resides in the cell membrane. It is found in the cytoplasm. The catalysed reaction is ATP + H2O + cellular proteinSide 1 = ADP + phosphate + cellular proteinSide 2.. In terms of biological role, part of the Sec protein translocase complex. Interacts with the SecYEG preprotein conducting channel. Has a central role in coupling the hydrolysis of ATP to the transfer of proteins into and across the cell membrane, serving as an ATP-driven molecular motor driving the stepwise translocation of polypeptide chains across the membrane. This is Protein translocase subunit SecA 2 from Corynebacterium jeikeium (strain K411).